The sequence spans 73 residues: UPF0346 protein SAS1364 (73 aa).

Belongs to the UPF0346 family.

This chain is UPF0346 protein SAS1364, found in Staphylococcus aureus (strain MSSA476).